Here is a 109-residue protein sequence, read N- to C-terminus: Non-structural protein NS-S (109 aa).

The protein belongs to the orthobunyavirus NS-S protein family.

Inhibits host transcriptional machinery, by producing modifications to the phosphorylation state of the C-terminal domain (CTD) of RNA polymerase II. Inhibits phosphorylation at serine 2 in the heptapeptide repeat (YSPTSPS) of the CTD of RNA polymerase II, suggesting that the elongation step of transcription and/or 3'-end processing is prevented. Inhibition of host transcription machinery leads to shut off of host cell protein synthesis and inhibition of the host innate immune response. NSs also seems to be involved in the nuclear relocalization of host PABP1. This is Non-structural protein NS-S (N) from Culex.